Reading from the N-terminus, the 535-residue chain is Peroxisomal membrane protein PEX29 (535 aa).

The next 2 membrane-spanning stretches (helical) occupy residues 139 to 159 (LSVPFVLIDQVIIIFSWSKPL) and 176 to 196 (ILLLSLPFFYTCFEIIVPAYM). Asparagine 239 is a glycosylation site (N-linked (GlcNAc...) asparagine). Residues 247 to 267 (MLLYVMSYDFVTSLIVKYLYF) traverse the membrane as a helical segment. An N-linked (GlcNAc...) asparagine glycan is attached at asparagine 271. A run of 2 helical transmembrane segments spans residues 272–292 (ITIFIFVALLTSGTLLTLFGA) and 297–317 (AMLPFIKVTLSVGLWAATIAM). Residues asparagine 450 and asparagine 515 are each glycosylated (N-linked (GlcNAc...) asparagine). The tract at residues 511-535 (AHRRNKSMESSNSLHPVKSIDSVDG) is disordered.

The protein belongs to the PEX28-32 family. PEX29 subfamily.

The protein localises to the endoplasmic reticulum membrane. In terms of biological role, with PEX23, contributes to the formation of endoplasmic reticulum-mitochondria junctions which are important for mitochondrial function. Involved in lipid dropplets formation. This chain is Peroxisomal membrane protein PEX29, found in Ogataea parapolymorpha (strain ATCC 26012 / BCRC 20466 / JCM 22074 / NRRL Y-7560 / DL-1) (Yeast).